We begin with the raw amino-acid sequence, 337 residues long: Alanine racemase (337 aa).

The Proton acceptor; specific for D-alanine role is filled by lysine 33. Lysine 33 carries the post-translational modification N6-(pyridoxal phosphate)lysine. A substrate-binding site is contributed by arginine 118. The Proton acceptor; specific for L-alanine role is filled by tyrosine 246. Methionine 292 provides a ligand contact to substrate.

It belongs to the alanine racemase family. Pyridoxal 5'-phosphate is required as a cofactor.

The enzyme catalyses L-alanine = D-alanine. It participates in amino-acid biosynthesis; D-alanine biosynthesis; D-alanine from L-alanine: step 1/1. Catalyzes the interconversion of L-alanine and D-alanine. May also act on other amino acids. This Campylobacter curvus (strain 525.92) protein is Alanine racemase (alr).